A 371-amino-acid chain; its full sequence is S-adenosylmethionine:tRNA ribosyltransferase-isomerase (371 aa).

It belongs to the QueA family. Monomer.

It is found in the cytoplasm. It carries out the reaction 7-aminomethyl-7-carbaguanosine(34) in tRNA + S-adenosyl-L-methionine = epoxyqueuosine(34) in tRNA + adenine + L-methionine + 2 H(+). It participates in tRNA modification; tRNA-queuosine biosynthesis. Its function is as follows. Transfers and isomerizes the ribose moiety from AdoMet to the 7-aminomethyl group of 7-deazaguanine (preQ1-tRNA) to give epoxyqueuosine (oQ-tRNA). In Nitratidesulfovibrio vulgaris (strain DP4) (Desulfovibrio vulgaris), this protein is S-adenosylmethionine:tRNA ribosyltransferase-isomerase.